Consider the following 49-residue polypeptide: Osteocalcin (49 aa).

A Pyrrolidone carboxylic acid modification is found at Gln-1. Residues 1–47 (QLINGQGAPAPYPDPLEPKREVCELNPDCDELADQVGLQDAYQRFYG) form the Gla domain. Pro-9 is subject to 4-hydroxyproline. The Ca(2+) site is built by Glu-17, Glu-21, Glu-24, and Asp-30. 4-carboxyglutamate occurs at positions 17, 21, and 24. A disulfide bond links Cys-23 and Cys-29.

The protein belongs to the osteocalcin/matrix Gla protein family. Post-translationally, gamma-carboxyglutamate residues are formed by vitamin K dependent carboxylation by GGCX. These residues are essential for the binding of calcium. Decarboxylation promotes the hormone activity.

The protein localises to the secreted. In terms of biological role, the carboxylated form is one of the main organic components of the bone matrix, which constitutes 1-2% of the total bone protein: it acts as a negative regulator of bone formation and is required to limit bone formation without impairing bone resorption or mineralization. The carboxylated form binds strongly to apatite and calcium. Its function is as follows. The uncarboxylated form acts as a hormone secreted by osteoblasts, which regulates different cellular processes, such as energy metabolism, male fertility and brain development. Regulates of energy metabolism by acting as a hormone favoring pancreatic beta-cell proliferation, insulin secretion and sensitivity and energy expenditure. Uncarboxylated osteocalcin hormone also promotes testosterone production in the testes: acts as a ligand for G protein-coupled receptor GPRC6A at the surface of Leydig cells, initiating a signaling response that promotes the expression of enzymes required for testosterone synthesis in a CREB-dependent manner. Also acts as a regulator of brain development: osteocalcin hormone crosses the blood-brain barrier and acts as a ligand for GPR158 on neurons, initiating a signaling response that prevents neuronal apoptosis in the hippocampus, favors the synthesis of all monoamine neurotransmitters and inhibits that of gamma-aminobutyric acid (GABA). Osteocalcin also crosses the placenta during pregnancy and maternal osteocalcin is required for fetal brain development. The sequence is that of Osteocalcin (BGLAP) from Oryctolagus cuniculus (Rabbit).